A 320-amino-acid polypeptide reads, in one-letter code: R2-like ligand binding oxidase (320 aa).

Mn(2+) contacts are provided by Glu68, Glu101, and His104. Positions 71–162 (VTKDIQPFMS…AAQVRASVVY (92 aa)) form a cross-link, 3-(O4'-tyrosyl)-valine (Val-Tyr). Glu101 provides a ligand contact to Fe cation. Residues Glu167, Glu202, and His205 each coordinate Fe cation.

This sequence belongs to the ribonucleoside diphosphate reductase small chain family. R2-like ligand binding oxidase subfamily. In terms of assembly, homodimer. It depends on Fe cation as a cofactor. Mn(2+) serves as cofactor.

Probable oxidase that might be involved in lipid metabolism. In Mycolicibacterium smegmatis (strain ATCC 700084 / mc(2)155) (Mycobacterium smegmatis), this protein is R2-like ligand binding oxidase (nrdB).